We begin with the raw amino-acid sequence, 341 residues long: Phosphoribosylformylglycinamidine cyclo-ligase (341 aa).

This sequence belongs to the AIR synthase family.

It is found in the cytoplasm. It catalyses the reaction 2-formamido-N(1)-(5-O-phospho-beta-D-ribosyl)acetamidine + ATP = 5-amino-1-(5-phospho-beta-D-ribosyl)imidazole + ADP + phosphate + H(+). Its pathway is purine metabolism; IMP biosynthesis via de novo pathway; 5-amino-1-(5-phospho-D-ribosyl)imidazole from N(2)-formyl-N(1)-(5-phospho-D-ribosyl)glycinamide: step 2/2. The chain is Phosphoribosylformylglycinamidine cyclo-ligase from Xanthomonas oryzae pv. oryzae (strain MAFF 311018).